Here is a 551-residue protein sequence, read N- to C-terminus: MFS efflux transporter aclA (551 aa).

Helical transmembrane passes span 26–46, 64–84, 93–113, 125–145, 154–174, 181–201, 220–240, and 251–271; these read WAVF…ITAI, VWIA…IGQI, PMII…GATS, GLGA…LVPL, IALS…GALV, WVFY…VLCL, WVGN…LVIG, and VLVP…FEAS. Asn-286 carries N-linked (GlcNAc...) asparagine glycosylation. The next 6 membrane-spanning stretches (helical) occupy residues 294 to 314, 327 to 347, 356 to 376, 385 to 405, 420 to 440, and 492 to 512; these read VLAF…TLFF, VDVI…GAIM, LHWA…TWDA, ILQC…LPAI, AYAF…AVVF, and LRTV…LVVV.

The protein belongs to the major facilitator superfamily.

The protein localises to the membrane. MFS efflux transporter; part of the gene cluster that mediates the biosynthesis of aspirochlorine (or antibiotic A30641), an unusual halogenated spiro compound with distinctive antifungal properties due to selective inhibition of protein biosynthesis, and which is also active against bacteria, viruses, and murine tumor cells. The protein is MFS efflux transporter aclA of Aspergillus oryzae (strain ATCC 42149 / RIB 40) (Yellow koji mold).